The chain runs to 576 residues: Arginine--tRNA ligase (576 aa).

The 'HIGH' region signature appears at 122 to 132; it reads PNVAKQMHVGH.

This sequence belongs to the class-I aminoacyl-tRNA synthetase family. As to quaternary structure, monomer.

It is found in the cytoplasm. It catalyses the reaction tRNA(Arg) + L-arginine + ATP = L-arginyl-tRNA(Arg) + AMP + diphosphate. The polypeptide is Arginine--tRNA ligase (Yersinia pseudotuberculosis serotype O:3 (strain YPIII)).